We begin with the raw amino-acid sequence, 329 residues long: GTP 3',8-cyclase (329 aa).

The Radical SAM core domain maps to 8-234 (AFARKYYYLR…QLRQRSDGPA (227 aa)). Arg-17 serves as a coordination point for GTP. [4Fe-4S] cluster contacts are provided by Cys-24 and Cys-28. Tyr-30 is a binding site for S-adenosyl-L-methionine. Cys-31 lines the [4Fe-4S] cluster pocket. GTP is bound at residue Arg-68. Gly-72 provides a ligand contact to S-adenosyl-L-methionine. Thr-99 provides a ligand contact to GTP. Position 123 (Ser-123) interacts with S-adenosyl-L-methionine. Lys-160 serves as a coordination point for GTP. An S-adenosyl-L-methionine-binding site is contributed by Met-194. 2 residues coordinate [4Fe-4S] cluster: Cys-257 and Cys-260. Position 262–264 (262–264 (RLR)) interacts with GTP. Residue Cys-274 participates in [4Fe-4S] cluster binding.

Belongs to the radical SAM superfamily. MoaA family. As to quaternary structure, monomer and homodimer. The cofactor is [4Fe-4S] cluster.

The catalysed reaction is GTP + AH2 + S-adenosyl-L-methionine = (8S)-3',8-cyclo-7,8-dihydroguanosine 5'-triphosphate + 5'-deoxyadenosine + L-methionine + A + H(+). It functions in the pathway cofactor biosynthesis; molybdopterin biosynthesis. In terms of biological role, catalyzes the cyclization of GTP to (8S)-3',8-cyclo-7,8-dihydroguanosine 5'-triphosphate. This chain is GTP 3',8-cyclase, found in Escherichia coli O17:K52:H18 (strain UMN026 / ExPEC).